A 330-amino-acid polypeptide reads, in one-letter code: Serpentine receptor class J-38 (330 aa).

The next 7 membrane-spanning stretches (helical) occupy residues 6 to 26 (IYIF…PIFV), 43 to 63 (LLLF…VVPI), 98 to 118 (LVAS…LVIY), 135 to 155 (LLLS…LGYA), 200 to 220 (TIIW…LALL), 253 to 273 (IPIV…IFGI), and 285 to 305 (GALG…LPIF).

Belongs to the nematode receptor-like protein srj family.

Its subcellular location is the membrane. The protein is Serpentine receptor class J-38 (srj-38) of Caenorhabditis elegans.